The sequence spans 168 residues: Lipoprotein signal peptidase (168 aa).

The next 2 helical transmembrane spans lie at 57 to 77 and 86 to 106; these read PKEV…LYVF and FILP…DRIT. Residues aspartate 112 and aspartate 138 contribute to the active site. The chain crosses the membrane as a helical span at residues 131-151; the sequence is WPIFNIADSAITIGACLLILF.

This sequence belongs to the peptidase A8 family.

The protein resides in the cell inner membrane. It carries out the reaction Release of signal peptides from bacterial membrane prolipoproteins. Hydrolyzes -Xaa-Yaa-Zaa-|-(S,diacylglyceryl)Cys-, in which Xaa is hydrophobic (preferably Leu), and Yaa (Ala or Ser) and Zaa (Gly or Ala) have small, neutral side chains.. Its pathway is protein modification; lipoprotein biosynthesis (signal peptide cleavage). Functionally, this protein specifically catalyzes the removal of signal peptides from prolipoproteins. The protein is Lipoprotein signal peptidase of Chlorobium phaeobacteroides (strain DSM 266 / SMG 266 / 2430).